The following is a 101-amino-acid chain: Apolipoprotein C-II (101 aa).

An N-terminal signal peptide occupies residues 1 to 26 (MGTRYFLALFLILLVLGFKVQGVAMA). The tract at residues 66-74 (TMDEKIRDI) is lipid binding. Residues 78 to 101 (STAAVTTYAGIFTDQLLSLLKGDQ) are lipoprotein lipase cofactor.

It belongs to the apolipoprotein C2 family. In terms of processing, proapolipoprotein C-II is synthesized as a sialic acid containing glycoprotein which is subsequently desialylated prior to its proteolytic processing. Proapolipoprotein C-II undergoes proteolytic cleavage of its N-terminal hexapeptide to generate apolipoprotein C-II. In bovine, proapolipoprotein C-II was found to be the minor form whereas apolipoprotein C-II was found to be the major form in plasma.

It is found in the secreted. In terms of biological role, component of chylomicrons, very low-density lipoproteins (VLDL), low-density lipoproteins (LDL), and high-density lipoproteins (HDL) in plasma. Plays an important role in lipoprotein metabolism as an activator of lipoprotein lipase. Both proapolipoprotein C-II and apolipoprotein C-II can activate lipoprotein lipase. In Camelus dromedarius (Dromedary), this protein is Apolipoprotein C-II (APOC2).